The following is a 122-amino-acid chain: Large ribosomal subunit protein uL14c (122 aa).

Belongs to the universal ribosomal protein uL14 family. Part of the 50S ribosomal subunit.

It is found in the plastid. Its function is as follows. Binds to 23S rRNA. This Cuscuta reflexa (Southern Asian dodder) protein is Large ribosomal subunit protein uL14c.